The following is a 157-amino-acid chain: 2-C-methyl-D-erythritol 2,4-cyclodiphosphate synthase (157 aa).

A divalent metal cation contacts are provided by aspartate 8 and histidine 10. Residues 8-10 (DVH) and 34-35 (HS) contribute to the 4-CDP-2-C-methyl-D-erythritol 2-phosphate site. Histidine 42 contacts a divalent metal cation. Residues 56–58 (DIG), 61–65 (FPDTD), 132–135 (TTEE), and phenylalanine 139 contribute to the 4-CDP-2-C-methyl-D-erythritol 2-phosphate site.

It belongs to the IspF family. As to quaternary structure, homotrimer. A divalent metal cation is required as a cofactor.

The enzyme catalyses 4-CDP-2-C-methyl-D-erythritol 2-phosphate = 2-C-methyl-D-erythritol 2,4-cyclic diphosphate + CMP. It participates in isoprenoid biosynthesis; isopentenyl diphosphate biosynthesis via DXP pathway; isopentenyl diphosphate from 1-deoxy-D-xylulose 5-phosphate: step 4/6. Functionally, involved in the biosynthesis of isopentenyl diphosphate (IPP) and dimethylallyl diphosphate (DMAPP), two major building blocks of isoprenoid compounds. Catalyzes the conversion of 4-diphosphocytidyl-2-C-methyl-D-erythritol 2-phosphate (CDP-ME2P) to 2-C-methyl-D-erythritol 2,4-cyclodiphosphate (ME-CPP) with a corresponding release of cytidine 5-monophosphate (CMP). The polypeptide is 2-C-methyl-D-erythritol 2,4-cyclodiphosphate synthase (Clostridium botulinum (strain Eklund 17B / Type B)).